A 544-amino-acid chain; its full sequence is Inward rectifier potassium channel irk-1 (544 aa).

Topologically, residues 1-109 (MTLSVPDCAE…IFTTMIDVKW (109 aa)) are cytoplasmic. Residues 110–134 (RWMLMLFASAFVLSWSIFGTTYYLI) traverse the membrane as a helical segment. At 135–158 (ALVHGDLSLPTPVNHTACVMNLDS) the chain is on the extracellular side. An intramembrane region (helical; Pore-forming) is located at residues 159–170 (VYSSFLFAVETH). An intramembrane region (pore-forming) is located at residues 171 to 177 (HTIGYGH). The Selectivity filter motif lies at 172-177 (TIGYGH). Residues 178-186 (RYITTECYL) lie on the Extracellular side of the membrane. The chain crosses the membrane as a helical span at residues 187–208 (AGAIVCLQAICALLLQSFMVGI). Residues 209 to 544 (VFAKMARPKK…PIHIEIVSET (336 aa)) are Cytoplasmic-facing. 2 disordered regions span residues 411–448 (HKLE…NSPV) and 512–533 (LSDL…SPPV). The span at 438–448 (NHFQSSSNSPV) shows a compositional bias: polar residues.

It belongs to the inward rectifier-type potassium channel (TC 1.A.2.1) family. In terms of tissue distribution, expressed in neurons in the head and tail with no expression detected in non-neuronal cells in these regions. Also detected in the egg-laying system of adult hermaphordites with strong expression in the HSN motor neurons and weak expression in vulval muscles.

The protein resides in the membrane. Its subcellular location is the perikaryon. It localises to the cell projection. Its function is as follows. Inward rectifier potassium channels are characterized by a greater tendency to allow potassium to flow into the cell rather than out of it. Required for modulation of the activity of the hermaphrodite-specific neurons (HSNs) by the G-protein coupled neuropeptide receptor egl-6 which in turn controls egg-laying behavior. This chain is Inward rectifier potassium channel irk-1 (irk-1), found in Caenorhabditis elegans.